The chain runs to 600 residues: Glutamine--fructose-6-phosphate aminotransferase [isomerizing] (600 aa).

Residue Cys-2 is the Nucleophile; for GATase activity of the active site. Positions 2 to 217 (CGIVGYIGQL…DKEMVIVTDD (216 aa)) constitute a Glutamine amidotransferase type-2 domain. SIS domains follow at residues 283–422 (IAAA…KNGI) and 452–590 (IARE…VDKP). Lys-595 functions as the For Fru-6P isomerization activity in the catalytic mechanism.

In terms of assembly, homodimer.

The protein resides in the cytoplasm. It catalyses the reaction D-fructose 6-phosphate + L-glutamine = D-glucosamine 6-phosphate + L-glutamate. In terms of biological role, catalyzes the first step in hexosamine metabolism, converting fructose-6P into glucosamine-6P using glutamine as a nitrogen source. This chain is Glutamine--fructose-6-phosphate aminotransferase [isomerizing] (glmS), found in Bacillus spizizenii (strain ATCC 23059 / NRRL B-14472 / W23) (Bacillus subtilis subsp. spizizenii).